Here is a 231-residue protein sequence, read N- to C-terminus: Acyltransferase PGAP2 (231 aa).

Over 1–22 (MQQVPYGSVDRDKPLIRVPFTR) the chain is Cytoplasmic. Residues 23–43 (LAVITVCLPLLGLVACIVLAM) form a helical membrane-spanning segment. Topologically, residues 44–78 (LYHYNDATYTHCQVPNYLPSISAAISLTPERYIWR) are lumenal. Residues 79–99 (FSIGLHSAPRFLVAAAYLSFY) traverse the membrane as a helical segment. Topologically, residues 100–110 (RGRFSRRLTEQ) are cytoplasmic. Residues 111–131 (LLSGFTFLLALSENVGLLLLT) form a helical membrane-spanning segment. Residues 132–146 (YVSSTETYSVHKSGF) are Lumenal-facing. A helical transmembrane segment spans residues 147–167 (ILFIGSSLFHMLCTCKLWSLI). Topologically, residues 168–179 (VKYSISSEEMMS) are cytoplasmic. A helical membrane pass occupies residues 180 to 200 (YWFKLRLFLFNGGCCVLAVYF). The Lumenal segment spans residues 201 to 231 (YRRHNTYCEEGITHASRCVSIWWCCPTWPST).

It belongs to the PGAP2 family.

The protein localises to the golgi apparatus membrane. Involved in the fatty acid remodeling steps of GPI-anchor maturation where the unsaturated acyl chain at sn-2 of inositol phosphate is replaced by a saturated stearoyl chain. May catalyze the second step of the fatty acid remodeling, by reacylating a lyso-GPI intermediate at sn-2 of inositol phosphate by a saturated chain. The fatty acid remodeling steps is critical for the integration of GPI-APs into lipid rafts. The protein is Acyltransferase PGAP2 of Danio rerio (Zebrafish).